We begin with the raw amino-acid sequence, 164 residues long: Phosphopantetheine adenylyltransferase (164 aa).

Serine 10 is a binding site for substrate. ATP-binding positions include 10-11 (SF) and histidine 18. Substrate-binding residues include lysine 42, threonine 79, and arginine 93. ATP is bound by residues 94-96 (GLR), glutamate 104, and 129-135 (VRPITAS).

This sequence belongs to the bacterial CoaD family. Homohexamer. It depends on Mg(2+) as a cofactor.

It is found in the cytoplasm. It carries out the reaction (R)-4'-phosphopantetheine + ATP + H(+) = 3'-dephospho-CoA + diphosphate. It functions in the pathway cofactor biosynthesis; coenzyme A biosynthesis; CoA from (R)-pantothenate: step 4/5. Functionally, reversibly transfers an adenylyl group from ATP to 4'-phosphopantetheine, yielding dephospho-CoA (dPCoA) and pyrophosphate. The protein is Phosphopantetheine adenylyltransferase of Bradyrhizobium sp. (strain ORS 278).